Consider the following 320-residue polypeptide: Methionyl-tRNA formyltransferase (320 aa).

Residue 111-114 (SLLP) coordinates (6S)-5,6,7,8-tetrahydrofolate.

This sequence belongs to the Fmt family.

It carries out the reaction L-methionyl-tRNA(fMet) + (6R)-10-formyltetrahydrofolate = N-formyl-L-methionyl-tRNA(fMet) + (6S)-5,6,7,8-tetrahydrofolate + H(+). Attaches a formyl group to the free amino group of methionyl-tRNA(fMet). The formyl group appears to play a dual role in the initiator identity of N-formylmethionyl-tRNA by promoting its recognition by IF2 and preventing the misappropriation of this tRNA by the elongation apparatus. The sequence is that of Methionyl-tRNA formyltransferase from Methylacidiphilum infernorum (isolate V4) (Methylokorus infernorum (strain V4)).